Consider the following 172-residue polypeptide: Secretory-abundant heat soluble protein 64681 (172 aa).

The first 19 residues, 1–19 (MSRTIVALILLGLAALAAA), serve as a signal peptide directing secretion. Residues 30 to 59 (EWAGKAWLGKWVSTDRSENWDAFVEALGLP) are SAHS-c1. The interval 74-102 (WKEGDHYHHQIIIADKSYKQDIQFKLGEE) is SAHS-c2. N-linked (GlcNAc...) asparagine glycans are attached at residues asparagine 108 and asparagine 133. Residues 115–164 (KYTEVGDNLQNEVKIPSKNKTISDSYVVKGDELEKTYKINDVVAKRWYKK) are SAHS-c3.

It belongs to the Secretory-abundant heat soluble protein (SAHS) family.

It localises to the secreted. Functionally, secreted heat soluble protein acting as a molecular shield in water-deficient condition. Tardigrade-specific intrinsically disordered proteins (TDPs) are essential for desiccation tolerance by forming non-crystalline amorphous solids upon desiccation, and this vitrified state mirrors their protective capabilities. The protein is Secretory-abundant heat soluble protein 64681 of Hypsibius exemplaris (Freshwater tardigrade).